Consider the following 292-residue polypeptide: Lyso-ornithine lipid O-acyltransferase (292 aa).

A helical membrane pass occupies residues 11 to 31 (GMLLVMVSLVLMPVQILCLWL). The disordered stretch occupies residues 258–292 (RLRGRSRSAAKGEPAPACSAAPDIPSDAQRSRLAP).

The protein belongs to the 1-acyl-sn-glycerol-3-phosphate acyltransferase family. OlsA subfamily.

It is found in the membrane. The enzyme catalyses a lyso-ornithine lipid + a fatty acyl-[ACP] = an N(2)-[(3R)-3-(acyloxy)acyl]-L-ornithine lipid + holo-[ACP]. The protein operates within lipid metabolism. In terms of biological role, catalyzes the second step in the formation of ornithine lipids, which are phosphorus-free membrane lipids. Uses acyl-acyl carrier protein (acyl-AcpP) as an acyl donor and converts lyso-ornithine lipid (LOL) into ornithine lipid (OL). The protein is Lyso-ornithine lipid O-acyltransferase of Rhizobium meliloti (strain 1021) (Ensifer meliloti).